Here is a 251-residue protein sequence, read N- to C-terminus: MGGINVIEIEIVPDHESASARVAGFIVEQIRRKPASVLGLATGGTPERTYELLVEKVNAGHLSFSQATTFNLDEYVGLLPDHPQSYHAYMRFRLFGETDFDAERTHLPKGTADELSDAGGQYEALIAEAGGIDLQLLGLGANGHIGFNEPGATEDSRTRVVDLTEETIAANARFFDSPEDVPRRALTMGIATILEAREIVLIATGESKAEAVERSVRGPVAPQMPASFLQQHPSVTFVLDEAAASLLDKRA.

Residue Asp-73 is the Proton acceptor; for enolization step of the active site. The For ring-opening step role is filled by Asn-142. Residue His-144 is the Proton acceptor; for ring-opening step of the active site. Glu-149 serves as the catalytic For ring-opening step.

This sequence belongs to the glucosamine/galactosamine-6-phosphate isomerase family. NagB subfamily.

The catalysed reaction is alpha-D-glucosamine 6-phosphate + H2O = beta-D-fructose 6-phosphate + NH4(+). The protein operates within amino-sugar metabolism; N-acetylneuraminate degradation; D-fructose 6-phosphate from N-acetylneuraminate: step 5/5. Its function is as follows. Catalyzes the reversible isomerization-deamination of glucosamine 6-phosphate (GlcN6P) to form fructose 6-phosphate (Fru6P) and ammonium ion. This Rhodopirellula baltica (strain DSM 10527 / NCIMB 13988 / SH1) protein is Glucosamine-6-phosphate deaminase.